Reading from the N-terminus, the 340-residue chain is Glycerol-3-phosphate dehydrogenase [NAD(P)+] (340 aa).

Residues Ser-11, Trp-12, Arg-33, and Lys-106 each coordinate NADPH. Sn-glycerol 3-phosphate-binding residues include Lys-106, Gly-137, and Ser-139. Ala-141 contacts NADPH. Lys-192, Asp-245, Ser-255, Arg-256, and Asn-257 together coordinate sn-glycerol 3-phosphate. Residue Lys-192 is the Proton acceptor of the active site. An NADPH-binding site is contributed by Arg-256. Residues Val-280 and Glu-282 each contribute to the NADPH site.

The protein belongs to the NAD-dependent glycerol-3-phosphate dehydrogenase family.

It is found in the cytoplasm. The enzyme catalyses sn-glycerol 3-phosphate + NAD(+) = dihydroxyacetone phosphate + NADH + H(+). It carries out the reaction sn-glycerol 3-phosphate + NADP(+) = dihydroxyacetone phosphate + NADPH + H(+). The protein operates within membrane lipid metabolism; glycerophospholipid metabolism. Its function is as follows. Catalyzes the reduction of the glycolytic intermediate dihydroxyacetone phosphate (DHAP) to sn-glycerol 3-phosphate (G3P), the key precursor for phospholipid synthesis. This Bacillus mycoides (strain KBAB4) (Bacillus weihenstephanensis) protein is Glycerol-3-phosphate dehydrogenase [NAD(P)+].